Here is a 356-residue protein sequence, read N- to C-terminus: S-adenosylmethionine:tRNA ribosyltransferase-isomerase (356 aa).

This sequence belongs to the QueA family. Monomer.

The protein localises to the cytoplasm. It catalyses the reaction 7-aminomethyl-7-carbaguanosine(34) in tRNA + S-adenosyl-L-methionine = epoxyqueuosine(34) in tRNA + adenine + L-methionine + 2 H(+). Its pathway is tRNA modification; tRNA-queuosine biosynthesis. Transfers and isomerizes the ribose moiety from AdoMet to the 7-aminomethyl group of 7-deazaguanine (preQ1-tRNA) to give epoxyqueuosine (oQ-tRNA). In Escherichia coli O8 (strain IAI1), this protein is S-adenosylmethionine:tRNA ribosyltransferase-isomerase.